Reading from the N-terminus, the 31-residue chain is Cliotide T14 (31 aa).

The segment at residues 1–31 (DTIPCGESCVWIPCISSILGCSCKDKVCYHN) is a cross-link (cyclopeptide (Asp-Asn)). 3 disulfides stabilise this stretch: C5–C21, C9–C23, and C14–C28.

In terms of processing, contains 3 disulfide bonds. This is a cyclic peptide. As to expression, expressed in seed but not in root nodules.

Probably participates in a plant defense mechanism. Not active against Gram-negative bacterium E.coli ATCC 700926 or Gram-positive bacterium S.aureus ATCC 12600 up to a concentration of 100 uM under low-salt conditions. The polypeptide is Cliotide T14 (Clitoria ternatea (Butterfly pea)).